The following is a 698-amino-acid chain: Glycine--tRNA ligase beta subunit (698 aa).

It belongs to the class-II aminoacyl-tRNA synthetase family. In terms of assembly, tetramer of two alpha and two beta subunits.

The protein resides in the cytoplasm. It catalyses the reaction tRNA(Gly) + glycine + ATP = glycyl-tRNA(Gly) + AMP + diphosphate. This is Glycine--tRNA ligase beta subunit from Xanthomonas campestris pv. campestris (strain 8004).